The sequence spans 342 residues: (Lyso)-N-acylphosphatidylethanolamine lipase (342 aa).

The region spanning 70–323 is the AB hydrolase-1 domain; that stretch reads PLVMVHGFGG…EIEGASHHVY (254 aa).

This sequence belongs to the peptidase S33 family. ABHD4/ABHD5 subfamily. As to expression, highest levels in the CNS and in testis, intermediate levels in liver and kidney. Hardly detectable in heart.

It catalyses the reaction N-hexadecanoyl-1,2-di-(9Z-octadecenoyl)-sn-glycero-3-phosphoethanolamine + H2O = N-hexadecanoyl-1-(9Z-octadecenoyl)-sn-glycero-3-phosphoethanolamine + (9Z)-octadecenoate + H(+). It carries out the reaction an N-acyl-1,2-diacyl-sn-glycero-3-phosphoethanolamine + H2O = N,1-diacyl-sn-glycero-3-phosphoethanolamine + a fatty acid + H(+). The catalysed reaction is N-hexadecanoyl-1-(9Z-octadecenoyl)-sn-glycero-3-phosphoethanolamine + H2O = N-hexadecanoyl-sn-glycero-3-phosphoethanolamine + (9Z)-octadecenoate + H(+). The enzyme catalyses N-octadecanoyl-1-(9Z-octadecenoyl)-sn-glycero-3-phosphoethanolamine + H2O = N-octadecanoyl-sn-glycero-3-phospho-ethanolamine + (9Z)-octadecenoate + H(+). It catalyses the reaction N-eicosanoyl-1-(9Z-octadecenoyl)-sn-glycero-3-phosphoethanolamine + H2O = N-eicosanoyl-sn-glycero-3-phosphoethanolamine + (9Z)-octadecenoate + H(+). It carries out the reaction N,1-di-(9Z-octadecenoyl)-sn-glycero-3-phosphoethanolamine + H2O = N-(9Z-octadecenoyl)-sn-glycero-3-phosphoethanolamine + (9Z)-octadecenoate + H(+). The catalysed reaction is N-(5Z,8Z,11Z,14Z-eicosatetraenoyl)-1-(9Z-octadecenoyl)-sn-glycero-3-phosphoethanolamine + H2O = N-(5Z,8Z,11Z,14Z-eicosatetraenoyl)-sn-glycero-3-phosphoethanolamine + (9Z)-octadecenoate + H(+). The enzyme catalyses 1-octadecanoyl-2-(9Z-octadecenoyl)-sn-glycero-3-phospho-(N-hexadecanoyl)-serine + H2O = 1-octadecanoyl-2-hydroxy-sn-glycero-3-phospho-(N-hexadecanoyl)-serine + (9Z)-octadecenoate + H(+). It catalyses the reaction 1-O-(1Z-octadecenoyl)-2-(9Z-octadecenoyl)-sn-glycero-3-phospho-N-hexadecanoyl-ethanolamine + H2O = 1-O-(1Z-octadecenyl)-sn-glycero-3-phospho-N-hexadecanoyl-ethanolamine + (9Z)-octadecenoate + H(+). It carries out the reaction N,1-diacyl-sn-glycero-3-phosphoethanolamine + H2O = N-acyl-sn-glycero-3-phosphoethanolamine + a fatty acid + H(+). Its function is as follows. Lysophospholipase selective for N-acyl phosphatidylethanolamine (NAPE). Contributes to the biosynthesis of N-acyl ethanolamines, including the endocannabinoid anandamide by hydrolyzing the sn-1 and sn-2 acyl chains from N-acyl phosphatidylethanolamine (NAPE) generating glycerophospho-N-acyl ethanolamine (GP-NAE), an intermediate for N-acyl ethanolamine biosynthesis. Hydrolyzes substrates bearing saturated, monounsaturated, polyunsaturated N-acyl chains. Shows no significant activity towards other lysophospholipids, including lysophosphatidylcholine, lysophosphatidylethanolamine and lysophosphatidylserine. In Mus musculus (Mouse), this protein is (Lyso)-N-acylphosphatidylethanolamine lipase.